The primary structure comprises 852 residues: MFWKFDLHSSSHIDTLLERDEVTLKELMDEEDILQECKAQNRKLVEFLLKAECLEDLVTFITEEPPQDMDEKIRYKYPNLSCELLTSDVSQINDRLGEDESLLKRLYAFLLNDPPLNPLLASFFSKVLSILISRKPEQIVAFLKQKDDFVNLIIKHIGTSAIMDLLLRLLTCIEPPQLRQDVLNWLNEEKIIQRLVEIVHPSQDEDRHSNASQSLCEIIRLSRDQMLQVQNSSEPDPLLATLEKKEILEQLLSNIFLKEKNESAIVSAIQILLTLLETRRPAFEGHIDLCPPGVNYSAFSVNKNVLAAIQERLPSFHQLLLDPPKTGVMKTTWGILDPPVGNTRLNVIRLIASLLQTNTHSINEELIELNTMGVILDMFFKYSWNNFLHTQVEICLALILASPGDSPEHSTISEQNSTGDHVLLKHLFLKCHLIDRILEAWAMNEKRQSEGGQRYGYMGHLTRIANCIVHSIEKGPNSVLAHQLIKDLPTDAQERWETFCTSSLGETNKRNTVDLVTTRHIHSSSDDEIEFKDPGFSQDSAIQQFGFNDEKFADQDDIGNVSFDRVSDINFSLNANESANIALFEACCKERIQQFDDGGSDEEDIWEEKNIAFPQETQRRSSSGSTDSEESTDSEEEETVKQGLFESSTVNHEDKMEVDANEASNWTANFDIPMETAHVASLDSVGSDAWSTEEPLSSKETGWASFSEFTSPINTKETIRSSSPVEMETSTEPVDPLSVNASAQTEVTVAMDAVSDGDEEGENADQMTETVMNGSMKETLSLTVDAKTETAVFKSEEGKLTTSHDSACKYGVVENFDSAMENAPPTQPSSSSQEQRTSEQIVLDGASANGPV.

Disordered stretches follow at residues 610–653 (NIAF…VNHE), 714–742 (NTKE…VNAS), and 817–852 (DSAM…NGPV). Over residues 627 to 638 (DSEESTDSEEEE) the composition is skewed to acidic residues. Polar residues predominate over residues 714–732 (NTKETIRSSSPVEMETSTE). Positions 828-840 (PSSSSQEQRTSEQ) are enriched in low complexity.

This sequence belongs to the SAPS family.

In terms of biological role, regulatory subunit of protein phosphatase 6 (PP6). May function as a scaffolding PP6 subunit. The sequence is that of Serine/threonine-protein phosphatase 6 regulatory subunit 3-A (ppp6r3-a) from Xenopus laevis (African clawed frog).